The sequence spans 199 residues: Protein-methionine-sulfoxide reductase heme-binding subunit MsrQ (199 aa).

5 consecutive transmembrane segments (helical) span residues 8–28 (ITWL…WLFW), 82–102 (LWCF…ELGI), 116–136 (PYLT…LTST), 149–169 (FLHN…LWSV), and 171–191 (ILSP…AWRY).

The protein belongs to the MsrQ family. In terms of assembly, heterodimer of a catalytic subunit (MsrP) and a heme-binding subunit (MsrQ). It depends on FMN as a cofactor. Heme b is required as a cofactor.

It localises to the cell inner membrane. Its function is as follows. Part of the MsrPQ system that repairs oxidized periplasmic proteins containing methionine sulfoxide residues (Met-O), using respiratory chain electrons. Thus protects these proteins from oxidative-stress damage caused by reactive species of oxygen and chlorine generated by the host defense mechanisms. MsrPQ is essential for the maintenance of envelope integrity under bleach stress, rescuing a wide series of structurally unrelated periplasmic proteins from methionine oxidation. MsrQ provides electrons for reduction to the reductase catalytic subunit MsrP, using the quinone pool of the respiratory chain. The protein is Protein-methionine-sulfoxide reductase heme-binding subunit MsrQ of Enterobacter sp. (strain 638).